The following is a 518-amino-acid chain: Probable alginate O-acetylase AlgI (518 aa).

Transmembrane regions (helical) follow at residues V2–G24, F39–I61, W78–V100, F115–I137, N150–F172, G319–I341, F354–F373, and A402–L424. The active site involves H322. Positions S435–P456 are disordered. Residues L493–Y515 form a helical membrane-spanning segment.

This sequence belongs to the membrane-bound acyltransferase family.

The protein localises to the cell inner membrane. Its pathway is glycan biosynthesis; alginate biosynthesis. In terms of biological role, together with AlgJ and AlgF, forms an inner membrane complex which probably interacts with the alginate polymerization-transport complex and adds acetyl groups at the O-2 and O-3 positions of mannuronate residues. Acetylation of alginate is important for the architecture of biofilms and increases the ability of alginate to act as a defense barrier. This is Probable alginate O-acetylase AlgI (algI) from Pseudomonas syringae pv. tomato (strain ATCC BAA-871 / DC3000).